The primary structure comprises 108 residues: L-rhamnose mutarotase (108 aa).

Position 18 (tyrosine 18) interacts with substrate. Catalysis depends on histidine 22, which acts as the Proton donor. Substrate-binding positions include tyrosine 41 and 76–77 (WW).

The protein belongs to the rhamnose mutarotase family. Homodimer.

It is found in the cytoplasm. It carries out the reaction alpha-L-rhamnose = beta-L-rhamnose. It participates in carbohydrate metabolism; L-rhamnose metabolism. Functionally, involved in the anomeric conversion of L-rhamnose. This is L-rhamnose mutarotase from Paraburkholderia phymatum (strain DSM 17167 / CIP 108236 / LMG 21445 / STM815) (Burkholderia phymatum).